Reading from the N-terminus, the 99-residue chain is Malonate decarboxylase acyl carrier protein (99 aa).

O-(phosphoribosyl dephospho-coenzyme A)serine is present on serine 25.

This sequence belongs to the MdcC family. Covalently binds the prosthetic group of malonate decarboxylase.

The protein localises to the cytoplasm. Its function is as follows. Subunit of malonate decarboxylase, it is an acyl carrier protein to which acetyl and malonyl thioester residues are bound via a 2'-(5''-phosphoribosyl)-3'-dephospho-CoA prosthetic group and turn over during the catalytic mechanism. This chain is Malonate decarboxylase acyl carrier protein, found in Azotobacter vinelandii (strain DJ / ATCC BAA-1303).